The chain runs to 468 residues: Homocitrate synthase (468 aa).

The Pyruvate carboxyltransferase domain occupies 11–266; the sequence is VGILDSTLRE…IEVVDLKKLS (256 aa). R19 contacts 2-oxoglutarate. Mg(2+) is bound at residue E20. 2-oxoglutarate contacts are provided by H83, R143, and T177. Positions 205 and 207 each coordinate Mg(2+). H299 serves as the catalytic Proton acceptor.

Belongs to the alpha-IPM synthase/homocitrate synthase family. Homocitrate synthase LYS20/LYS21 subfamily. It depends on Mg(2+) as a cofactor. Requires Mn(2+) as cofactor.

The enzyme catalyses acetyl-CoA + 2-oxoglutarate + H2O = (2R)-homocitrate + CoA + H(+). Its pathway is amino-acid biosynthesis; L-lysine biosynthesis via AAA pathway; L-alpha-aminoadipate from 2-oxoglutarate: step 1/5. Its activity is regulated as follows. Inhibited by lysine. Catalyzes the aldol-type condensation of 2-oxoglutarate with acetyl-CoA to yield homocitrate. Carries out the first step of the alpha-aminoadipate (AAA) lysine biosynthesis pathway. Does not display 2-isopropylmalate synthase and citramalate synthase activities since it cannot use 2-oxoisovalerate or pyruvate as substrate. This Sulfolobus acidocaldarius (strain ATCC 33909 / DSM 639 / JCM 8929 / NBRC 15157 / NCIMB 11770) protein is Homocitrate synthase.